Reading from the N-terminus, the 441-residue chain is Arginine biosynthesis bifunctional protein ArgJ, mitochondrial (441 aa).

Substrate is bound by residues Thr177, Lys204, Thr215, Glu301, Asn436, and Ser441. Residue Thr215 is the Nucleophile of the active site.

It belongs to the ArgJ family. As to quaternary structure, heterodimer of an alpha and a beta chain. Post-translationally, the alpha and beta chains are autoproteolytically processed from a single precursor protein within the mitochondrion.

The protein resides in the mitochondrion matrix. The enzyme catalyses N(2)-acetyl-L-ornithine + L-glutamate = N-acetyl-L-glutamate + L-ornithine. It catalyses the reaction L-glutamate + acetyl-CoA = N-acetyl-L-glutamate + CoA + H(+). The protein operates within amino-acid biosynthesis; L-arginine biosynthesis; L-ornithine and N-acetyl-L-glutamate from L-glutamate and N(2)-acetyl-L-ornithine (cyclic): step 1/1. It participates in amino-acid biosynthesis; L-arginine biosynthesis; N(2)-acetyl-L-ornithine from L-glutamate: step 1/4. Its function is as follows. Catalyzes two activities which are involved in the cyclic version of arginine biosynthesis: the synthesis of acetylglutamate from glutamate and acetyl-CoA, and of ornithine by transacetylation between acetylornithine and glutamate. This is Arginine biosynthesis bifunctional protein ArgJ, mitochondrial from Lachancea thermotolerans (strain ATCC 56472 / CBS 6340 / NRRL Y-8284) (Yeast).